A 1456-amino-acid chain; its full sequence is Alpha-2-macroglobulin-like protein 1 (1456 aa).

The N-terminal stretch at 1 to 19 (MVPTILLSALLLHFTDVVA) is a signal peptide. Residues N48, N172, and N868 are each glycosylated (N-linked (GlcNAc...) asparagine).

This sequence belongs to the protease inhibitor I39 (alpha-2-macroglobulin) family. In terms of assembly, homotetramer; consists of two dimer pairs that are disulfide-linked. Part of a complex composed of complement component C3, CLCA1/CLCA3, A2ML1/OH and ALB/serum albumin.

The protein localises to the secreted. In terms of biological role, inhibits protease gelatinolytic complex activity against type 1 collagen. In Mus musculus (Mouse), this protein is Alpha-2-macroglobulin-like protein 1.